A 226-amino-acid chain; its full sequence is X-linked lymphocyte-regulated protein 3C (226 aa).

Residues 1 to 66 (MSSRKRKATD…QARKEKQDLV (66 aa)) are disordered. Basic and acidic residues predominate over residues 8-18 (ATDTAGRHSRM). The segment covering 21–30 (NLSSDDSQNP) has biased composition (polar residues). Composition is skewed to basic and acidic residues over residues 39-48 (EVLDAGREDI) and 56-66 (QQARKEKQDLV). Positions 155 to 210 (ESLTLQKNRMEEFKSLCEKYLEKLEVLRDSRGNSIAEELRRLIATLEIKLLMLHNQ) form a coiled coil.

Belongs to the XLR/SYCP3 family. In terms of tissue distribution, expressed in lymphoid cells.

The protein is X-linked lymphocyte-regulated protein 3C (Xlr3c) of Mus musculus (Mouse).